The following is a 390-amino-acid chain: GTPase Obg (390 aa).

Residues 1-159 (MKFVDEASIL…RELLLELMLL (159 aa)) enclose the Obg domain. The tract at residues 127–147 (NTRFKSSVNRTPRQKTNGTPG) is disordered. Polar residues predominate over residues 129 to 145 (RFKSSVNRTPRQKTNGT). The OBG-type G domain occupies 160–333 (ADVGMLGMPN…LCWDVMTFII (174 aa)). GTP-binding positions include 166–173 (GMPNAGKS), 191–195 (FTTLV), 213–216 (DIPG), 283–286 (NKID), and 314–316 (SAA). Mg(2+) is bound by residues serine 173 and threonine 193.

Belongs to the TRAFAC class OBG-HflX-like GTPase superfamily. OBG GTPase family. In terms of assembly, monomer. Mg(2+) is required as a cofactor.

The protein resides in the cytoplasm. Its function is as follows. An essential GTPase which binds GTP, GDP and possibly (p)ppGpp with moderate affinity, with high nucleotide exchange rates and a fairly low GTP hydrolysis rate. Plays a role in control of the cell cycle, stress response, ribosome biogenesis and in those bacteria that undergo differentiation, in morphogenesis control. The chain is GTPase Obg from Escherichia coli O7:K1 (strain IAI39 / ExPEC).